Here is a 188-residue protein sequence, read N- to C-terminus: ATP synthase subunit b (188 aa).

The chain crosses the membrane as a helical span at residues 19–39 (VYVLGATIVSFLILFLFITYF).

Belongs to the ATPase B chain family. F-type ATPases have 2 components, F(1) - the catalytic core - and F(0) - the membrane proton channel. F(1) has five subunits: alpha(3), beta(3), gamma(1), delta(1), epsilon(1). F(0) has three main subunits: a(1), b(2) and c(10-14). The alpha and beta chains form an alternating ring which encloses part of the gamma chain. F(1) is attached to F(0) by a central stalk formed by the gamma and epsilon chains, while a peripheral stalk is formed by the delta and b chains.

The protein resides in the cell membrane. F(1)F(0) ATP synthase produces ATP from ADP in the presence of a proton or sodium gradient. F-type ATPases consist of two structural domains, F(1) containing the extramembraneous catalytic core and F(0) containing the membrane proton channel, linked together by a central stalk and a peripheral stalk. During catalysis, ATP synthesis in the catalytic domain of F(1) is coupled via a rotary mechanism of the central stalk subunits to proton translocation. Its function is as follows. Component of the F(0) channel, it forms part of the peripheral stalk, linking F(1) to F(0). This chain is ATP synthase subunit b, found in Mesomycoplasma hyopneumoniae (strain J / ATCC 25934 / NCTC 10110) (Mycoplasma hyopneumoniae).